Consider the following 505-residue polypeptide: Histidine ammonia-lyase (505 aa).

The 5-imidazolinone (Ala-Gly) cross-link spans 141–143 (ASG). At Ser-142 the chain carries 2,3-didehydroalanine (Ser).

The protein belongs to the PAL/histidase family. In terms of processing, contains an active site 4-methylidene-imidazol-5-one (MIO), which is formed autocatalytically by cyclization and dehydration of residues Ala-Ser-Gly.

It localises to the cytoplasm. It catalyses the reaction L-histidine = trans-urocanate + NH4(+). Its pathway is amino-acid degradation; L-histidine degradation into L-glutamate; N-formimidoyl-L-glutamate from L-histidine: step 1/3. This Bacillus mycoides (strain KBAB4) (Bacillus weihenstephanensis) protein is Histidine ammonia-lyase.